We begin with the raw amino-acid sequence, 948 residues long: RNA polymerase-associated protein RapA (948 aa).

Positions 164–332 constitute a Helicase ATP-binding domain; the sequence is EVADRIAPRV…FARLRLLDPN (169 aa). 177 to 184 contacts ATP; the sequence is DEVGLGKT. The DEAH box motif lies at 278–281; it reads DEAH. The Helicase C-terminal domain occupies 473–627; it reads RVEWLIDTLK…TCPTGNALQH (155 aa).

This sequence belongs to the SNF2/RAD54 helicase family. RapA subfamily. Interacts with the RNAP. Has a higher affinity for the core RNAP than for the holoenzyme. Its ATPase activity is stimulated by binding to RNAP.

Its function is as follows. Transcription regulator that activates transcription by stimulating RNA polymerase (RNAP) recycling in case of stress conditions such as supercoiled DNA or high salt concentrations. Probably acts by releasing the RNAP, when it is trapped or immobilized on tightly supercoiled DNA. Does not activate transcription on linear DNA. Probably not involved in DNA repair. The chain is RNA polymerase-associated protein RapA from Pseudomonas syringae pv. tomato (strain ATCC BAA-871 / DC3000).